Consider the following 513-residue polypeptide: Cytochrome P450 94A2 (513 aa).

A helical membrane pass occupies residues 7 to 24 (ISWLLFSTSLFWFLFLAT). Residue cysteine 455 coordinates heme.

This sequence belongs to the cytochrome P450 family. The cofactor is heme. In terms of tissue distribution, weakly expressed in seedlings.

The protein localises to the endoplasmic reticulum membrane. Catalyzes the omega-hydroxylation of various fatty acids (FA). The substrate specificity is higher for myristate &gt; laurate = palmitate (C14&gt;C16=C12). The protein is Cytochrome P450 94A2 (CYP94A2) of Vicia sativa (Spring vetch).